A 542-amino-acid polypeptide reads, in one-letter code: MAMAGAPIVVLPQNVKRYVGRDAQRMNILAGRIIAETVRTTLGPKGMDKMLVDELGDIVVTNDGVTILKEMSVEHPAAKMLIEVAKTQEKEVGDGTTTAVVIAGELLRKAEELLDQNIHPSVIINGYEMARNKAVEELKSIAKEVKPEDTEMLKKIAMTSITGKGAEKAREQLAEIVVEAVRAVVDEETGKVDKDLIKVEKKEGAPIEETKLIRGVVIDKERVNPQMPKKVENAKIALLNCPIEVKETETDAEIRITDPAKLMEFIEQEEKMIKDMVEKIAATGANVVFCQKGIDDLAQHYLAKKGILAVRRVKKSDMEKLAKATGARIVTKIDDLTPEDLGEAGLVEERKVAGDAMIFVEQCKHPKAVTILARGSTEHVVEEVARAIDDAIGVVKCALEEGKIVAGGGATEIELAKRLRKFAESVAGREQLAVKAFADALEVIPRTLAENSGLDPIDMLVKLRAAHEKEGGEVYGLDVFEGEVVDMLEKGVVEPLKVKTQAIDSATEASVMLLRIDDVIAAEKVKGDEKGGEGGDMGGDEF.

The protein belongs to the TCP-1 chaperonin family. Forms an oligomeric complex of eight-membered rings.

Molecular chaperone; binds unfolded polypeptides in vitro, and has a weak ATPase activity. This Methanocaldococcus jannaschii (strain ATCC 43067 / DSM 2661 / JAL-1 / JCM 10045 / NBRC 100440) (Methanococcus jannaschii) protein is Thermosome subunit (ths).